The sequence spans 176 residues: Isopentenyl-diphosphate Delta-isomerase (176 aa).

Residues His22 and His28 each contribute to the Mn(2+) site. The 135-residue stretch at 26-160 (LRHKAVSVFV…PDRYTPWLRI (135 aa)) folds into the Nudix hydrolase domain. Residue Cys62 is part of the active site. His64 provides a ligand contact to Mn(2+). Glu82 serves as a coordination point for Mg(2+). Residues Glu108 and Glu110 each coordinate Mn(2+). Residue Glu110 is part of the active site.

This sequence belongs to the IPP isomerase type 1 family. Requires Mg(2+) as cofactor. The cofactor is Mn(2+).

Its subcellular location is the cytoplasm. It carries out the reaction isopentenyl diphosphate = dimethylallyl diphosphate. It functions in the pathway isoprenoid biosynthesis; dimethylallyl diphosphate biosynthesis; dimethylallyl diphosphate from isopentenyl diphosphate: step 1/1. Its pathway is porphyrin-containing compound metabolism; chlorophyll biosynthesis. Functionally, catalyzes the 1,3-allylic rearrangement of the homoallylic substrate isopentenyl (IPP) to its highly electrophilic allylic isomer, dimethylallyl diphosphate (DMAPP). The polypeptide is Isopentenyl-diphosphate Delta-isomerase (Roseobacter denitrificans (strain ATCC 33942 / OCh 114) (Erythrobacter sp. (strain OCh 114))).